A 602-amino-acid polypeptide reads, in one-letter code: GTP-binding protein 1 (602 aa).

Residue Ser2 is modified to Phosphoserine. One can recognise a tr-type G domain in the interval 91 to 322 (FLEVRVAVVG…LNLLSPRTSY (232 aa)). The G1 stretch occupies residues 100–107 (GNVDAGKS). Residue 100–107 (GNVDAGKS) coordinates GTP. Residues 139–143 (GRTSS) form a G2 region. The segment at 185-188 (DLAG) is G3. GTP contacts are provided by residues 185–189 (DLAGH) and 241–244 (TKID). Positions 241-244 (TKID) are G4. A G5 region spans residues 299-301 (SNV). The segment covering 506-528 (LLQTTNNSPMNSKPQQIKMQSTK) has biased composition (polar residues). The disordered stretch occupies residues 506–602 (LLQTTNNSPM…GACVTPASGC (97 aa)). Residue Ser513 is modified to Phosphoserine. Residues 579–589 (GRRRGGQRYKV) are compositionally biased toward basic residues.

This sequence belongs to the TRAFAC class translation factor GTPase superfamily. Classic translation factor GTPase family. GTPBP1 subfamily. Interacts with EXOSC2/RRP4, EXOSC3/RRP40, EXOSC5/RRP46, HNRNPD, HNRNPR and SYNCRIP. Identified in a complex with AANAT mRNA, but does not bind mRNA by itself.

The protein resides in the cytoplasm. Its function is as follows. Promotes degradation of target mRNA species. Plays a role in the regulation of circadian mRNA stability. Binds GTP and has GTPase activity. In Pongo abelii (Sumatran orangutan), this protein is GTP-binding protein 1 (GTPBP1).